Consider the following 563-residue polypeptide: MRLALWMYQGTAHHGVGRIANSMRGVHAVFHAPQGDDYVNPIFTMLERTPDFPRMTTSIVSGRDLAQGTVRLPETLRQVDAQVQPDLIIVCASCSTILLQEDLERMAHSAGTRAETLVYDANPYRMQEVRSADGLFTLLTQRFARSQPPTAVPSVNILGPASLGFHNRSDLICLRRMLATLGVQVNVVAPLGASIRDLERLPAAWATIAPYRELGQNAARWLDEQFGVPALTDSPIGVQPTLRWLRRLVETLNDAGERLQRLTNPLRLPPLTAFSLDGMSAPSSVPWFARTADMESYSMKRAFVFGDATHTVGMVKFLRDELGMQIVGAGTYLEHEADWVRGELQDYLPADETGSIDTSFLVTEVFQDVARRIADLTPELVCGTQMERHACRKLDLPCMVIAPPTHIENHLLSYRPVLGFDGADVLADTVYTTATLGMEKHLIDMFGDAGLEYEEPRTERREAEFGNQKVETGEPGTGAPVIAHADSNGGVAGSSSTLAAQTVTASPRLVTPVWAPEAQAMLKKVPFFVRGRVQKNVERYAAQHGYATITAEILVEAKEALGG.

Asp-36 provides a ligand contact to [4Fe-4S] cluster. The active-site Proton donor is Asp-293. Residue 437–438 (GM) coordinates substrate. The disordered stretch occupies residues 459-478 (ERREAEFGNQKVETGEPGTG).

Belongs to the ChlB/BchB/BchZ family. In terms of assembly, protochlorophyllide reductase is composed of three subunits; BchL, BchN and BchB. Forms a heterotetramer of two BchB and two BchN subunits. Requires [4Fe-4S] cluster as cofactor.

The catalysed reaction is chlorophyllide a + oxidized 2[4Fe-4S]-[ferredoxin] + 2 ADP + 2 phosphate = protochlorophyllide a + reduced 2[4Fe-4S]-[ferredoxin] + 2 ATP + 2 H2O. It participates in porphyrin-containing compound metabolism; bacteriochlorophyll biosynthesis (light-independent). Its function is as follows. Component of the dark-operative protochlorophyllide reductase (DPOR) that uses Mg-ATP and reduced ferredoxin to reduce ring D of protochlorophyllide (Pchlide) to form chlorophyllide a (Chlide). This reaction is light-independent. The NB-protein (BchN-BchB) is the catalytic component of the complex. This is Light-independent protochlorophyllide reductase subunit B from Roseiflexus castenholzii (strain DSM 13941 / HLO8).